The chain runs to 261 residues: Probable enoyl-CoA hydratase EchA17 (261 aa).

Belongs to the enoyl-CoA hydratase/isomerase family.

The catalysed reaction is a (3S)-3-hydroxyacyl-CoA = a (2E)-enoyl-CoA + H2O. It carries out the reaction a 4-saturated-(3S)-3-hydroxyacyl-CoA = a (3E)-enoyl-CoA + H2O. Functionally, could possibly oxidize fatty acids using specific components. The polypeptide is Probable enoyl-CoA hydratase EchA17 (echA17) (Mycobacterium bovis (strain BCG / Pasteur 1173P2)).